The following is a 350-amino-acid chain: uncharacterized protein (350 aa).

A signal peptide spans 1-27 (MKNKKRVLIASSLSCAILLLSAATTQA). Residues 28 to 71 (NSAHKDSQDQNKKEHVDKSQQKEKRNVTNKDKNSTVPDDIGKNG) are disordered. Positions 30–60 (AHKDSQDQNKKEHVDKSQQKEKRNVTNKDKN) are enriched in basic and acidic residues.

The protein belongs to the aerolysin family.

This is an uncharacterized protein from Staphylococcus aureus (strain MSSA476).